Reading from the N-terminus, the 70-residue chain is MKQGIHPEYKEITATCSCGNVIKTRSTVGKNLNLDVCSNCHPFYTGKQRVVDTGGRVERFNKRFSIPSSK.

Zn(2+) is bound by residues Cys16, Cys18, Cys37, and Cys40.

The protein belongs to the bacterial ribosomal protein bL31 family. Type A subfamily. In terms of assembly, part of the 50S ribosomal subunit. Requires Zn(2+) as cofactor.

Its function is as follows. Binds the 23S rRNA. The polypeptide is Large ribosomal subunit protein bL31 (Histophilus somni (strain 2336) (Haemophilus somnus)).